A 729-amino-acid chain; its full sequence is Heterogeneous nuclear ribonucleoprotein M (729 aa).

Residues 1–13 show a composition bias toward low complexity; the sequence is MAAGVEAAAEVAA. The tract at residues 1-65 is disordered; that stretch reads MAAGVEAAAE…GGNRFEPYSN (65 aa). Position 2 is an N-acetylalanine (Ala-2). Residue Lys-17 forms a Glycyl lysine isopeptide (Lys-Gly) (interchain with G-Cter in SUMO2) linkage. A Phosphoserine modification is found at Ser-29. Glycyl lysine isopeptide (Lys-Gly) (interchain with G-Cter in SUMO2) cross-links involve residues Lys-37, Lys-68, and Lys-82. A compositionally biased stretch (basic and acidic residues) spans 37–49; that stretch reads KGEERPTQNEKRK. RRM domains lie at 70–148 and 203–280; these read YRAF…EDPD and STVF…MDER. Ser-85 carries the post-translational modification Phosphoserine. Residues Lys-87 and Lys-126 each participate in a glycyl lysine isopeptide (Lys-Gly) (interchain with G-Cter in SUMO2) cross-link. At Lys-133 the chain carries N6-acetyllysine; alternate. Residue Lys-133 forms a Glycyl lysine isopeptide (Lys-Gly) (interchain with G-Cter in SUMO2); alternate linkage. Glycyl lysine isopeptide (Lys-Gly) (interchain with G-Cter in SUMO2) cross-links involve residues Lys-142 and Lys-144. A Phosphoserine modification is found at Ser-203. Residue Lys-220 forms a Glycyl lysine isopeptide (Lys-Gly) (interchain with G-Cter in SUMO2) linkage. Lys-276 is modified (N6-acetyllysine; alternate). Lys-276 is covalently cross-linked (Glycyl lysine isopeptide (Lys-Gly) (interchain with G-Cter in SUMO2); alternate). Glycyl lysine isopeptide (Lys-Gly) (interchain with G-Cter in SUMO2) cross-links involve residues Lys-284 and Lys-344. Residues Ser-364 and Ser-376 each carry the phosphoserine modification. Residues Lys-380 and Lys-387 each participate in a glycyl lysine isopeptide (Lys-Gly) (interchain with G-Cter in SUMO2) cross-link. Residue Ser-396 is modified to Phosphoserine. Repeat copies occupy residues 399 to 404, 406 to 411, 414 to 419, and 425 to 430. The interval 399–607 is 27 X 6 AA repeats of [GEVSTPAN]-[ILMV]-[DE]-[RH]-[MLVI]-[GAV]; sequence GIERMGPGID…ALGAGIERMG (209 aa). Position 431 is a phosphoserine (Ser-431). 3 consecutive repeat copies span residues 432–437, 439–444, and 445–450. A Phosphoserine modification is found at Ser-451. Tandem repeats lie at residues 452–457, 460–465, 467–472, and 474–479. Ser-467 carries the phosphoserine modification. Ser-480 bears the Phosphoserine mark. 16 consecutive repeat copies span residues 481 to 486, 492 to 497, 499 to 504, 506 to 511, 513 to 518, 520 to 525, 527 to 532, 539 to 544, 546 to 551, 553 to 558, 561 to 566, 567 to 571, 574 to 579, 580 to 584, 587 to 592, and 602 to 607. Arg-495 carries the omega-N-methylarginine modification. Residue Ser-527 is modified to Phosphoserine. Ser-574 carries the post-translational modification Phosphoserine. Residue Ser-587 is modified to Phosphoserine. A phosphoserine mark is found at Ser-617, Ser-632, and Ser-636. Residue Lys-650 forms a Glycyl lysine isopeptide (Lys-Gly) (interchain with G-Cter in SUMO2) linkage. Residues 652–728 enclose the RRM 3 domain; it reads CQIFVRNLPF…REIDVRIDRN (77 aa). The residue at position 664 (Thr-664) is a Phosphothreonine. A Glycyl lysine isopeptide (Lys-Gly) (interchain with G-Cter in SUMO2) cross-link involves residue Lys-666. Lys-671 carries the post-translational modification N6-acetyllysine. Residues Lys-684 and Lys-691 each participate in a glycyl lysine isopeptide (Lys-Gly) (interchain with G-Cter in SUMO2) cross-link. Lys-697 is subject to N6-acetyllysine; alternate. Lys-697 participates in a covalent cross-link: Glycyl lysine isopeptide (Lys-Gly) (interchain with G-Cter in SUMO2); alternate. Lys-697 is covalently cross-linked (Glycyl lysine isopeptide (Lys-Gly) (interchain with G-Cter in SUMO1); alternate). A Phosphoserine modification is found at Ser-700. Lys-715 is covalently cross-linked (Glycyl lysine isopeptide (Lys-Gly) (interchain with G-Cter in SUMO2)).

Identified in the spliceosome C complex. Interacts with PPIA/CYPA. Sumoylated.

The protein resides in the nucleus. Pre-mRNA binding protein in vivo, binds avidly to poly(G) and poly(U) RNA homopolymers in vitro. Involved in splicing. Acts as a receptor for carcinoembryonic antigen in Kupffer cells, may initiate a series of signaling events leading to tyrosine phosphorylation of proteins and induction of IL-1 alpha, IL-6, IL-10 and tumor necrosis factor alpha cytokines. This chain is Heterogeneous nuclear ribonucleoprotein M (Hnrnpm), found in Mus musculus (Mouse).